Reading from the N-terminus, the 78-residue chain is Large ribosomal subunit protein bL28 (78 aa).

It belongs to the bacterial ribosomal protein bL28 family.

This Pseudomonas aeruginosa (strain LESB58) protein is Large ribosomal subunit protein bL28.